The sequence spans 314 residues: Olfactory receptor 5P66 (314 aa).

The Extracellular segment spans residues 1–28 (MAFLENGNHTAVSEFILLGLTDDPVLRI). N-linked (GlcNAc...) asparagine glycosylation occurs at Asn8. Residues 29-49 (VLFTIILCIYLVTVSGNLSTI) form a helical membrane-spanning segment. Residues 50–57 (LLIRVSSQ) lie on the Cytoplasmic side of the membrane. The helical transmembrane segment at 58 to 78 (LHHPMYFFLSHLASADIGLSS) threads the bilayer. Over 79-102 (SVTPNMLVNFLVERSTISYLGCGI) the chain is Extracellular. A disulfide bridge connects residues Cys100 and Cys192. The chain crosses the membrane as a helical span at residues 103–123 (QLSSAALFGATECFLLAAMAY). Topologically, residues 124–136 (DRFMAICNPLLYS) are cytoplasmic. Residues 137 to 157 (TKMSTKVCVQLIVGSYIAGFL) traverse the membrane as a helical segment. Topologically, residues 158-199 (NASSFLLSFFSLLFCGQNIINDFFCDFAPLAELSCSDVSVFV) are extracellular. A helical membrane pass occupies residues 200 to 220 (VVISFSAGTVTMLTVFVIAIS). The Cytoplasmic portion of the chain corresponds to 221-240 (YSYILITILKMRSTEGRQKA). The helical transmembrane segment at 241 to 261 (FSTCTSHLTAVTLFYGTVTFI) threads the bilayer. At 262-274 (YVMPKSSYSMDQN) the chain is on the extracellular side. Residues 275 to 295 (KIISVFYMVVVPMLNPLIYSL) form a helical membrane-spanning segment. The Cytoplasmic portion of the chain corresponds to 296-314 (RNNEIKGALKRHFDRKTFS).

Belongs to the G-protein coupled receptor 1 family.

The protein localises to the cell membrane. Its function is as follows. Potential odorant receptor. This chain is Olfactory receptor 5P66, found in Mus musculus (Mouse).